We begin with the raw amino-acid sequence, 149 residues long: D-aminoacyl-tRNA deacylase (149 aa).

Residues 137–138 (GP) carry the Gly-cisPro motif, important for rejection of L-amino acids motif.

This sequence belongs to the DTD family. In terms of assembly, homodimer.

It is found in the cytoplasm. It catalyses the reaction glycyl-tRNA(Ala) + H2O = tRNA(Ala) + glycine + H(+). It carries out the reaction a D-aminoacyl-tRNA + H2O = a tRNA + a D-alpha-amino acid + H(+). An aminoacyl-tRNA editing enzyme that deacylates mischarged D-aminoacyl-tRNAs. Also deacylates mischarged glycyl-tRNA(Ala), protecting cells against glycine mischarging by AlaRS. Acts via tRNA-based rather than protein-based catalysis; rejects L-amino acids rather than detecting D-amino acids in the active site. By recycling D-aminoacyl-tRNA to D-amino acids and free tRNA molecules, this enzyme counteracts the toxicity associated with the formation of D-aminoacyl-tRNA entities in vivo and helps enforce protein L-homochirality. The sequence is that of D-aminoacyl-tRNA deacylase from Clostridium botulinum (strain Alaska E43 / Type E3).